Here is a 789-residue protein sequence, read N- to C-terminus: Ribosomal protein S6 kinase alpha-5 (789 aa).

Residues 39–308 form the Protein kinase 1 domain; sequence FELLKVLGTG…ADEIKQHPFF (270 aa). ATP-binding positions include 45 to 53 and Lys-71; that span reads LGTGAYGKV. Catalysis depends on Asp-167, which acts as the Proton acceptor. Ser-202 is subject to Phosphoserine; by autocatalysis. In terms of domain architecture, AGC-kinase C-terminal spans 309–377; that stretch reads QNINWDDLAA…VAPSILFKRN (69 aa). Residue Ser-350 is modified to Phosphoserine. A phosphoserine; by autocatalysis mark is found at Ser-366 and Ser-371. In terms of domain architecture, Protein kinase 2 spans 416-677; sequence DLKEKPLGEG…MSSLRYNEWL (262 aa). ATP is bound by residues 422–430 and Lys-445; that span reads LGEGSFSIC. The active-site Proton acceptor is Asp-534. Phosphothreonine occurs at positions 571 and 690. The tract at residues 731–789 is disordered; it reads AKRRKMKKTSTSTETRSSSSESSHSSSSHSHGKTTPTKTLQPTNPTDSNNPETIFQFSD. Residues 739–769 are compositionally biased toward low complexity; the sequence is TSTSTETRSSSSESSHSSSSHSHGKTTPTKT. Phosphoserine; by autocatalysis occurs at positions 740, 742, and 748. Residues 770-789 are compositionally biased toward polar residues; sequence LQPTNPTDSNNPETIFQFSD.

This sequence belongs to the protein kinase superfamily. AGC Ser/Thr protein kinase family. S6 kinase subfamily. Mg(2+) serves as cofactor. In terms of processing, ser-366 and Thr-571 phosphorylation is required for kinase activity. Ser-366 and Ser-202 are autophosphorylated by the C-terminal kinase domain, and their phosphorylation is essential for the catalytic activity of the N-terminal kinase domain. Phosphorylated at Ser-350, Thr-571 and Thr-690 by MAP kinases. Autophosphorylated at Ser-740, Ser-742 and Ser-748 by the N-terminal kinase domain. As to expression, widely expressed with high levels in heart, brain and placenta. Less abundant in lung, kidney and liver.

The protein localises to the nucleus. The enzyme catalyses L-seryl-[protein] + ATP = O-phospho-L-seryl-[protein] + ADP + H(+). It carries out the reaction L-threonyl-[protein] + ATP = O-phospho-L-threonyl-[protein] + ADP + H(+). Activated by phosphorylation at Ser-350, Thr-571 and Thr-690 by MAP kinases, and by further autophosphorylation of Ser-202, Ser-366 and Ser-371 by the activated C-terminal kinase domain. The active N-terminal kinase domain finally phosphorylates downstream substrates, as well as Ser-740, Ser-742 and Ser-748 in its own C-terminal region. Its function is as follows. Serine/threonine-protein kinase that is required for the mitogen or stress-induced phosphorylation of the transcription factors CREB1 and ATF1 and that contributes to gene activation by histone phosphorylation. Phosphorylates CREB1 and ATF1 in response to mitogenic or stress stimuli such as UV-C irradiation, epidermal growth factor (EGF) and anisomycin. Directly represses transcription via phosphorylation of 'Ser-1' of histone H2A. Phosphorylates 'Ser-10' of histone H3 in response to mitogenics, stress stimuli and EGF, which results in the transcriptional activation of several immediate early genes, including proto-oncogenes c-fos/FOS and c-jun/JUN. May also phosphorylate 'Ser-28' of histone H3. Mediates the mitogen- and stress-induced phosphorylation of high mobility group protein 1 (HMGN1/HMG14). This Gallus gallus (Chicken) protein is Ribosomal protein S6 kinase alpha-5 (RPS6KA5).